Consider the following 113-residue polypeptide: Endoribonuclease SymE (113 aa).

The 46-residue stretch at 29–74 (SRYPDYSRIPAITLKGQWLEAAGFATGTAVDVKVMEGCIVLTAQPP) folds into the SpoVT-AbrB domain.

Belongs to the SymE family.

It is found in the cytoplasm. Functionally, involved in the degradation and recycling of damaged RNA. It is itself a target for degradation by the ATP-dependent protease Lon. The protein is Endoribonuclease SymE of Escherichia coli O6:K15:H31 (strain 536 / UPEC).